The sequence spans 118 residues: MSITSLKNQKEFELINKLGKKLHERYFILVIATKLPKIFLESKYNTFLGIKVSRKLSKKAVVRNKIKRRIRHLIRIIVSDSSFKAIKFAMIIIPRKGFEEINFSHLNYELSKVILRNM.

This sequence belongs to the RnpA family. As to quaternary structure, consists of a catalytic RNA component (M1 or rnpB) and a protein subunit.

It carries out the reaction Endonucleolytic cleavage of RNA, removing 5'-extranucleotides from tRNA precursor.. Functionally, RNaseP catalyzes the removal of the 5'-leader sequence from pre-tRNA to produce the mature 5'-terminus. It can also cleave other RNA substrates such as 4.5S RNA. The protein component plays an auxiliary but essential role in vivo by binding to the 5'-leader sequence and broadening the substrate specificity of the ribozyme. This chain is Ribonuclease P protein component, found in Rickettsia peacockii (strain Rustic).